Here is a 560-residue protein sequence, read N- to C-terminus: Membrane protein insertase YidC (560 aa).

Residues 1-21 (MDIKRTILIAALAVVSYVMVL) form a helical membrane-spanning segment. The interval 42 to 66 (VAPGLPDGVPAGNNGASADVPSANA) is disordered. 5 consecutive transmembrane segments (helical) span residues 341–361 (LELT…FWLL), 367–387 (LLGN…GLFF), 437–457 (LGGC…YWVL), 468–488 (WILW…PIIM), and 515–535 (PIIF…YWVV).

It belongs to the OXA1/ALB3/YidC family. Type 1 subfamily. As to quaternary structure, interacts with the Sec translocase complex via SecD. Specifically interacts with transmembrane segments of nascent integral membrane proteins during membrane integration.

The protein localises to the cell inner membrane. In terms of biological role, required for the insertion and/or proper folding and/or complex formation of integral membrane proteins into the membrane. Involved in integration of membrane proteins that insert both dependently and independently of the Sec translocase complex, as well as at least some lipoproteins. Aids folding of multispanning membrane proteins. The sequence is that of Membrane protein insertase YidC from Pseudomonas putida (strain ATCC 700007 / DSM 6899 / JCM 31910 / BCRC 17059 / LMG 24140 / F1).